Here is a 377-residue protein sequence, read N- to C-terminus: RNA polymerase sigma factor SigA (377 aa).

Residues 72–92 are disordered; it reads EVSNLRQGEDHDGNDNDDFNF. A sigma-70 factor domain-2 region spans residues 144-214; the sequence is LAEANLRLVV…TRAIADQART (71 aa). The Interaction with polymerase core subunit RpoC signature appears at 168-171; it reads DLIQ. The sigma-70 factor domain-3 stretch occupies residues 223 to 299; that stretch reads ETINKLIRVS…DQEALTPADA (77 aa). Residues 312–365 are sigma-70 factor domain-4; that stretch reads VLDTLTEREENVLRLRFGLDDGRTRTLEEVGKVFGVTRERIRQIEAKALRKLRH. Positions 338-357 form a DNA-binding region, H-T-H motif; the sequence is LEEVGKVFGVTRERIRQIEA.

It belongs to the sigma-70 factor family. RpoD/SigA subfamily. Interacts transiently with the RNA polymerase catalytic core.

It is found in the cytoplasm. Its function is as follows. Sigma factors are initiation factors that promote the attachment of RNA polymerase to specific initiation sites and are then released. This sigma factor is the primary sigma factor during exponential growth. The chain is RNA polymerase sigma factor SigA from Bacillus sp.